Here is a 211-residue protein sequence, read N- to C-terminus: 2,3-bisphosphoglycerate-dependent phosphoglycerate mutase (211 aa).

Substrate-binding positions include 9 to 16, 22 to 23, arginine 61, 88 to 91, lysine 99, 115 to 116, and 159 to 160; these read RHGQSDWN, TG, ERDY, RR, and GN. The active-site Tele-phosphohistidine intermediate is the histidine 10. The Proton donor/acceptor role is filled by glutamate 88.

The protein belongs to the phosphoglycerate mutase family. BPG-dependent PGAM subfamily. Homodimer.

It catalyses the reaction (2R)-2-phosphoglycerate = (2R)-3-phosphoglycerate. Its pathway is carbohydrate degradation; glycolysis; pyruvate from D-glyceraldehyde 3-phosphate: step 3/5. In terms of biological role, catalyzes the interconversion of 2-phosphoglycerate and 3-phosphoglycerate. The sequence is that of 2,3-bisphosphoglycerate-dependent phosphoglycerate mutase from Rhizobium johnstonii (strain DSM 114642 / LMG 32736 / 3841) (Rhizobium leguminosarum bv. viciae).